Here is a 773-residue protein sequence, read N- to C-terminus: Mitochondrial 15S rRNA processing factor CCM1 (773 aa).

A mitochondrion-targeting transit peptide spans methionine 1 to tyrosine 23. Positions alanine 89–arginine 106 are enriched in basic and acidic residues. The tract at residues alanine 89–lysine 122 is disordered. PPR repeat units follow at residues serine 220–proline 254, threonine 255–alanine 285, asparagine 294–threonine 328, threonine 331–asparagine 365, and valine 366–serine 400.

It belongs to the CCM1 family. In terms of assembly, binds to mitochondrial small subunit 15S rRNA.

The protein resides in the mitochondrion. Regulates mitochondrial small subunit maturation by controlling 15S rRNA 5'-end processing. Localizes to the 5' precursor of the 15S rRNA in a position that is subsequently occupied by mS47 in the mature yeast mtSSU. Uses structure and sequence-specific RNA recognition, binding to a single-stranded region of the precursor and specifically recognizing bases -6 to -1. The exchange of Ccm1 for mS47 is coupled to the irreversible removal of precursor rRNA that is accompanied by conformational changes of the mitoribosomal proteins uS5m and mS26. These conformational changes signal completion of 5'-end rRNA processing through protection of the mature 5'-end of the 15S rRNA and stabilization of mS47. The removal of the 5' precursor together with the dissociation of Ccm1 may be catalyzed by the 5'-3' exoribonuclease Pet127. Involved in the specific removal of group I introns in mitochondrial encoded transcripts. The sequence is that of Mitochondrial 15S rRNA processing factor CCM1 (CCM1) from Yarrowia lipolytica (strain CLIB 122 / E 150) (Yeast).